Reading from the N-terminus, the 214-residue chain is Protein FAM167A (214 aa).

Disordered stretches follow at residues 1-26 and 59-108; these read MSVP…PDDH and PFPR…LSTG. A coiled-coil region spans residues 118 to 156; that stretch reads EAIAWLRKELTEMRLQDQQLARQLMRLRGDINKLKIEHT.

The protein belongs to the FAM167 (SEC) family. In terms of tissue distribution, expressed in skin, including primary keratinocytes, spleen, kidney, leukocytes, testis, lung, small intestine and prostate.

The protein is Protein FAM167A (FAM167A) of Homo sapiens (Human).